Consider the following 253-residue polypeptide: Light-harvesting complex stress-related protein 1, chloroplastic (253 aa).

The transit peptide at Met1–Pro39 directs the protein to the chloroplast. Residue Tyr45 participates in chlorophyll b binding. Chlorophyll a is bound by residues Phe60, Glu81, and His84. Arg86 provides a ligand contact to chlorophyll b. Residues Val87–Phe107 form a helical membrane-spanning segment. Gln124 serves as a coordination point for chlorophyll a. Residues Glu131–Thr151 form a helical membrane-spanning segment. 2 residues coordinate chlorophyll b: Glu141 and Arg144. Chlorophyll a-binding residues include Lys190, Glu191, Asn194, Arg196, and Gln208. Residues Leu197–Phe217 traverse the membrane as a helical segment.

The protein belongs to the light-harvesting chlorophyll a/b-binding (LHC) protein family.

It is found in the plastid. Its subcellular location is the chloroplast thylakoid membrane. In terms of biological role, required for non-photochemical quenching (NPQ), a mechanism that converts and dissipates the harmful excess absorbed light energy into heat and protect the photosynthetic apparatus from photo-oxidative damage. Is able to sense luminal acidification of the thylakoid membranes, which occurs along with elevated electron flow caused by excess light, and to induce a large, fast, and reversible pH-dependent quenching in LHCII-containing membranes. Mediates excitation energy transfer from light-harvesting complex II (LHCII) to photosystem I (PSI), rather than photosystem II (PSII), at low pH, which mimics the acidified lumen of the thylakoid membranes in high light-exposed chloroplasts. Activates PSI-dependent fluorescence quenching in addition to dissipating excitation energy in LHCII to avoid photooxidative stress under excess light. The polypeptide is Light-harvesting complex stress-related protein 1, chloroplastic (Chlamydomonas reinhardtii (Chlamydomonas smithii)).